The following is a 333-amino-acid chain: Ornithine carbamoyltransferase (333 aa).

Residues 56 to 59 (STRT), Gln-83, Arg-107, and 134 to 137 (HPTQ) contribute to the carbamoyl phosphate site. L-ornithine-binding positions include Asn-167, Asp-231, and 235–236 (SM). Carbamoyl phosphate contacts are provided by residues 273-274 (CL) and Arg-318.

This sequence belongs to the aspartate/ornithine carbamoyltransferase superfamily. OTCase family.

The protein resides in the cytoplasm. It catalyses the reaction carbamoyl phosphate + L-ornithine = L-citrulline + phosphate + H(+). It functions in the pathway amino-acid biosynthesis; L-arginine biosynthesis; L-arginine from L-ornithine and carbamoyl phosphate: step 1/3. Its function is as follows. Reversibly catalyzes the transfer of the carbamoyl group from carbamoyl phosphate (CP) to the N(epsilon) atom of ornithine (ORN) to produce L-citrulline. The chain is Ornithine carbamoyltransferase from Staphylococcus aureus (strain MSSA476).